The sequence spans 459 residues: mRNA-capping enzyme subunit alpha (459 aa).

Lysine 70 serves as the catalytic N6-GMP-lysine intermediate. The tract at residues 415–459 is disordered; that stretch reads MAGGSGRPLPSQSQNATLSTSKPVHSQPPSNDKEPKYVDEDDWSD. Over residues 424 to 444 the composition is skewed to polar residues; the sequence is PSQSQNATLSTSKPVHSQPPS.

Belongs to the eukaryotic GTase family. In terms of assembly, heterodimer. The mRNA-capping enzyme is composed of two separate chains alpha and beta, respectively a mRNA guanylyltransferase and an mRNA 5'-triphosphate monophosphatase.

The protein localises to the nucleus. The enzyme catalyses a 5'-end diphospho-ribonucleoside in mRNA + GTP + H(+) = a 5'-end (5'-triphosphoguanosine)-ribonucleoside in mRNA + diphosphate. Second step of mRNA capping. Transfer of the GMP moiety of GTP to the 5'-diphosphate terminus of RNA via a covalent enzyme-GMP reaction intermediate. In Saccharomyces cerevisiae (strain ATCC 204508 / S288c) (Baker's yeast), this protein is mRNA-capping enzyme subunit alpha (CEG1).